We begin with the raw amino-acid sequence, 401 residues long: Argininosuccinate synthase (401 aa).

ATP is bound at residue 8 to 16; that stretch reads AYSGGLDTS. Tyr-85 contributes to the L-citrulline binding site. Gly-115 is a binding site for ATP. Thr-117, Asn-121, and Asp-122 together coordinate L-aspartate. Asn-121 is a binding site for L-citrulline. Residues Arg-125, Ser-173, Ser-182, Glu-258, and Tyr-270 each contribute to the L-citrulline site.

It belongs to the argininosuccinate synthase family. Type 1 subfamily. In terms of assembly, homotetramer.

It is found in the cytoplasm. It carries out the reaction L-citrulline + L-aspartate + ATP = 2-(N(omega)-L-arginino)succinate + AMP + diphosphate + H(+). It participates in amino-acid biosynthesis; L-arginine biosynthesis; L-arginine from L-ornithine and carbamoyl phosphate: step 2/3. In Staphylococcus saprophyticus subsp. saprophyticus (strain ATCC 15305 / DSM 20229 / NCIMB 8711 / NCTC 7292 / S-41), this protein is Argininosuccinate synthase.